A 556-amino-acid chain; its full sequence is 2-succinyl-5-enolpyruvyl-6-hydroxy-3-cyclohexene-1-carboxylate synthase (556 aa).

The protein belongs to the TPP enzyme family. MenD subfamily. Homodimer. Requires Mg(2+) as cofactor. The cofactor is Mn(2+). It depends on thiamine diphosphate as a cofactor.

It carries out the reaction isochorismate + 2-oxoglutarate + H(+) = 5-enolpyruvoyl-6-hydroxy-2-succinyl-cyclohex-3-ene-1-carboxylate + CO2. The protein operates within quinol/quinone metabolism; 1,4-dihydroxy-2-naphthoate biosynthesis; 1,4-dihydroxy-2-naphthoate from chorismate: step 2/7. Its pathway is quinol/quinone metabolism; menaquinone biosynthesis. Its function is as follows. Catalyzes the thiamine diphosphate-dependent decarboxylation of 2-oxoglutarate and the subsequent addition of the resulting succinic semialdehyde-thiamine pyrophosphate anion to isochorismate to yield 2-succinyl-5-enolpyruvyl-6-hydroxy-3-cyclohexene-1-carboxylate (SEPHCHC). This is 2-succinyl-5-enolpyruvyl-6-hydroxy-3-cyclohexene-1-carboxylate synthase from Salmonella agona (strain SL483).